The chain runs to 1050 residues: uncharacterized protein (1050 aa).

Residues 1–83 lie on the Cytoplasmic side of the membrane; that stretch reads MARLLTKSSQ…AVKLGTFEGC (83 aa). Phosphoserine is present on residues Ser-9 and Ser-60. A Phosphothreonine modification is found at Thr-64. Residues 84–104 traverse the membrane as a helical segment; that stretch reads FIPTTLNVLSILLYLRFPWII. Residues 105–112 are Extracellular-facing; it reads GEAGVLKT. A helical transmembrane segment spans residues 113 to 133; that stretch reads LLMLFISYAVGIFTSLSISAI. Residues 134-146 are Cytoplasmic-facing; that stretch reads CTNGMVRGGGAYY. The chain crosses the membrane as a helical span at residues 147–169; the sequence is AVSRSIGPELGGSIGLIFYVGQI. The Extracellular segment spans residues 170-202; sequence LNTGMNISGFVEPIISIFGKESGTISQFLPEGY. Residue Asn-175 is glycosylated (N-linked (GlcNAc...) asparagine). Residues 203–223 traverse the membrane as a helical segment; the sequence is WWVFLYTTCVLAMCCILCCLG. Over 224-232 the chain is Cytoplasmic; that stretch reads SAIFAKASN. The helical transmembrane segment at 233-253 threads the bilayer; it reads ALFVVIILSTISIPISSIFVH. The Extracellular portion of the chain corresponds to 254–295; that stretch reads PFKDPSLLVHFTGLKWSTLMKNLASAYTENEKGTGYESFKST. At Ser-270 the chain carries Phosphoserine. Residue Thr-271 is modified to Phosphothreonine. A helical membrane pass occupies residues 296–316; that stretch reads FGVFFPATAGLLAGASMSGDL. Residues 317–334 are Cytoplasmic-facing; the sequence is KAPSRSIPKGTISSQATT. The chain crosses the membrane as a helical span at residues 335–355; it reads FLLYLLVILCVGASVTRTGLL. The Extracellular portion of the chain corresponds to 356 to 368; sequence LDMDVMEHISLHP. A helical transmembrane segment spans residues 369–389; sequence LFIISGILSSGAFSSFMGIFG. At 390–417 the chain is on the cytoplasmic side; sequence AAKLLQAIARDDLIPGMFFFAKGSSYDD. The chain crosses the membrane as a helical span at residues 418–438; it reads IPYVAIGVTYLITQISLFWDI. Topologically, residues 439-442 are extracellular; it reads NMLS. Residues 443–463 traverse the membrane as a helical segment; the sequence is SMITMTFLLTFGFINLSCFLL. Over 464–480 the chain is Cytoplasmic; that stretch reads RISSTPNFRPTFRYFNR. The helical transmembrane segment at 481-497 threads the bilayer; sequence RTTLVGTILSFGVMFYV. The Extracellular segment spans residues 498–499; the sequence is DR. Residues 500-520 traverse the membrane as a helical segment; it reads LNAFISFLIAGILVVVIYFTC. Residues 521–1050 lie on the Cytoplasmic side of the membrane; that stretch reads PPKNWGDVSQ…SKSLTITTAL (530 aa). Ser-901 carries the phosphoserine modification. The disordered stretch occupies residues 915-943; that stretch reads ETESSFGNRSLSPKQENRRTYSDSTIESS. Positions 916 to 928 are enriched in polar residues; that stretch reads TESSFGNRSLSPK. The residue at position 936 (Ser-936) is a Phosphoserine. Position 939 is a phosphothreonine (Thr-939).

The protein belongs to the SLC12A transporter family.

The protein resides in the membrane. This is an uncharacterized protein from Schizosaccharomyces pombe (strain 972 / ATCC 24843) (Fission yeast).